Here is a 645-residue protein sequence, read N- to C-terminus: Minor extracellular protease Epr (645 aa).

A signal peptide spans 1–27 (MKNMSCKLVVSVTLFFSFLTIGPLAHA). Residues 28 to 103 (QNSSEKEVIV…AADSTDFKVL (76 aa)) constitute a propeptide that is removed on maturation. The Peptidase S8 domain maps to 115 to 382 (QWNLEPIQVK…YGLIQYKAQA (268 aa)). Catalysis depends on charge relay system residues Asp142, His172, and Ser326. Disordered regions lie at residues 490-577 (KQAK…KTAL) and 591-645 (AEAK…KPKK). The segment covering 491-508 (QAKDKVAKAEKSKKKTDV) has biased composition (basic and acidic residues). Residues 522 to 547 (SEKTSLQKRLNKVKSTNLKTAQQSVS) are compositionally biased toward polar residues. The segment covering 592 to 610 (EAKKVETAKAKVKKAEKDK) has biased composition (basic and acidic residues).

This sequence belongs to the peptidase S8 family. May undergo two steps of processing in its passage through the cell membrane: removal of the N-terminal signal sequence and cleavage of the C-terminal domain. Several active forms of Epr with molecular masses between 40 and 34 kDa were found in the medium of B.subtilis cultures. The size variation of the active forms expressed by the complete epr gene appears to be the result of partial removal of the C-terminus either by processing or degradation.

The protein localises to the secreted. It is found in the cell wall. Requires Ca(2+) for stability. Activity is inhibited by phenylmethylsulfonyl fluoride (PMSF) and EDTA. In terms of biological role, serine protease. Involved in the production of the competence and sporulation stimulating factor CSF. In addition, is essential for swarming motility. Plays a key role in DegU-mediated swarming motility. The protease activity is dispensable for swarming. Not essential for growth or sporulation. In Bacillus subtilis (strain 168), this protein is Minor extracellular protease Epr.